The sequence spans 401 residues: Coenzyme A biosynthesis bifunctional protein CoaBC (401 aa).

The tract at residues 1–190 is phosphopantothenoylcysteine decarboxylase; it reads MQTLAGKKIL…FQPKPLQDKS (190 aa). Residue Cys159 is the Proton donor of the active site. The tract at residues 191–401 is phosphopantothenate--cysteine ligase; that stretch reads ILITAGPTRE…LKQIQTLMGH (211 aa). CTP is bound by residues Asp279, Lys289, 307–310, Phe326, Lys340, and Lys344; that span reads PDIV.

This sequence in the N-terminal section; belongs to the HFCD (homo-oligomeric flavin containing Cys decarboxylase) superfamily. In the C-terminal section; belongs to the PPC synthetase family. It depends on Mg(2+) as a cofactor. FMN is required as a cofactor.

It carries out the reaction N-[(R)-4-phosphopantothenoyl]-L-cysteine + H(+) = (R)-4'-phosphopantetheine + CO2. It catalyses the reaction (R)-4'-phosphopantothenate + L-cysteine + CTP = N-[(R)-4-phosphopantothenoyl]-L-cysteine + CMP + diphosphate + H(+). It functions in the pathway cofactor biosynthesis; coenzyme A biosynthesis; CoA from (R)-pantothenate: step 2/5. The protein operates within cofactor biosynthesis; coenzyme A biosynthesis; CoA from (R)-pantothenate: step 3/5. Its function is as follows. Catalyzes two sequential steps in the biosynthesis of coenzyme A. In the first step cysteine is conjugated to 4'-phosphopantothenate to form 4-phosphopantothenoylcysteine. In the second step the latter compound is decarboxylated to form 4'-phosphopantotheine. The protein is Coenzyme A biosynthesis bifunctional protein CoaBC of Vibrio vulnificus (strain YJ016).